The sequence spans 117 residues: Large ribosomal subunit protein bL20c (117 aa).

The protein belongs to the bacterial ribosomal protein bL20 family.

Its subcellular location is the plastid. The protein localises to the chloroplast. Binds directly to 23S ribosomal RNA and is necessary for the in vitro assembly process of the 50S ribosomal subunit. It is not involved in the protein synthesizing functions of that subunit. The sequence is that of Large ribosomal subunit protein bL20c from Draba nemorosa (Woodland whitlowgrass).